A 263-amino-acid chain; its full sequence is Thiazole synthase (263 aa).

The Schiff-base intermediate with DXP role is filled by K100. 1-deoxy-D-xylulose 5-phosphate contacts are provided by residues G161, A187–G188, and N209–T210.

The protein belongs to the ThiG family. In terms of assembly, homotetramer. Forms heterodimers with either ThiH or ThiS.

It localises to the cytoplasm. The enzyme catalyses [ThiS sulfur-carrier protein]-C-terminal-Gly-aminoethanethioate + 2-iminoacetate + 1-deoxy-D-xylulose 5-phosphate = [ThiS sulfur-carrier protein]-C-terminal Gly-Gly + 2-[(2R,5Z)-2-carboxy-4-methylthiazol-5(2H)-ylidene]ethyl phosphate + 2 H2O + H(+). It functions in the pathway cofactor biosynthesis; thiamine diphosphate biosynthesis. Its function is as follows. Catalyzes the rearrangement of 1-deoxy-D-xylulose 5-phosphate (DXP) to produce the thiazole phosphate moiety of thiamine. Sulfur is provided by the thiocarboxylate moiety of the carrier protein ThiS. In vitro, sulfur can be provided by H(2)S. This Shouchella clausii (strain KSM-K16) (Alkalihalobacillus clausii) protein is Thiazole synthase.